Here is a 37-residue protein sequence, read N- to C-terminus: Translationally-controlled tumor protein homolog (37 aa).

One can recognise a TCTP domain in the interval 1 to 37 (MKIFRDILTNAEVVXDNDKPMDVLDEIVYAXQGRYIE).

This sequence belongs to the TCTP family. As to quaternary structure, monomer.

It is found in the cytoplasm. Its function is as follows. Binds calcium; exact function not known. This is Translationally-controlled tumor protein homolog from Trypanosoma brucei brucei.